The following is a 222-amino-acid chain: Niacin transporter NiaX (222 aa).

A run of 5 helical transmembrane segments spans residues 34–54, 72–94, 101–120, 135–155, and 167–187; these read NLII…MMPV, MAAM…LGFM, TIWL…AYVL, IFNF…VYAF, and ALLN…MIDF.

This sequence belongs to the vitamin uptake transporter (VUT/ECF) (TC 2.A.88) family. In terms of assembly, in L.lactis forms a stable complex with EcfA, EcfA' and EcfT. In E.coli forms a stable energy-coupling factor (ECF) transporter complex composed of 2 membrane-embedded substrate-binding proteins (S component), 2 ATP-binding proteins (A and A' components) and 2 transmembrane proteins (T component), probably with a stoichiometry of 2:1:1:2. May be able to interact with more than 1 S component at a time.

It is found in the cell membrane. Probably a niacin-binding protein that interacts with the energy-coupling factor (ECF) ABC-transporter complex. Unlike classic ABC transporters this ECF transporter provides the energy necessary to transport a number of different substrates. The substrates themselves are bound by transmembrane, not extracytoplasmic soluble proteins. Uptake of niacin into proteosomes containing EcfA1A2T and Niax has been demonstrated. Uptake requires hydrolyzable Mg-ATP and is substrate-specific; NiaX-containing proteosomes did not transport riboflavin. This is Niacin transporter NiaX (niaX) from Lactococcus lactis subsp. cremoris (strain MG1363).